The primary structure comprises 189 residues: Methylated-DNA--protein-cysteine methyltransferase (189 aa).

Residues Tyr-128 and Arg-142 each coordinate DNA. Catalysis depends on Cys-159, which acts as the Nucleophile; methyl group acceptor. Position 165 (Ser-165) interacts with DNA.

Belongs to the MGMT family.

Its subcellular location is the nucleus. It catalyses the reaction a 6-O-methyl-2'-deoxyguanosine in DNA + L-cysteinyl-[protein] = S-methyl-L-cysteinyl-[protein] + a 2'-deoxyguanosine in DNA. The catalysed reaction is a 4-O-methyl-thymidine in DNA + L-cysteinyl-[protein] = a thymidine in DNA + S-methyl-L-cysteinyl-[protein]. In terms of biological role, involved in the cellular defense against the biological effects of O6-methylguanine (O6-MeG) and O4-methylthymine (O4-MeT) in DNA. Repairs the methylated nucleobase in DNA by stoichiometrically transferring the methyl group to a cysteine residue in the enzyme. This is a suicide reaction: the enzyme is irreversibly inactivated. The polypeptide is Methylated-DNA--protein-cysteine methyltransferase (MGT1) (Kluyveromyces lactis (strain ATCC 8585 / CBS 2359 / DSM 70799 / NBRC 1267 / NRRL Y-1140 / WM37) (Yeast)).